Here is a 260-residue protein sequence, read N- to C-terminus: 14-3-3 protein 4 (260 aa).

The segment at 238–260 (DNADDVGDDIKEASKPESGEGQQ) is disordered. Positions 245–260 (DDIKEASKPESGEGQQ) are enriched in basic and acidic residues.

This sequence belongs to the 14-3-3 family. As to quaternary structure, homodimer.

This chain is 14-3-3 protein 4 (TFT4), found in Solanum lycopersicum (Tomato).